A 179-amino-acid polypeptide reads, in one-letter code: ATP synthase subunit delta (179 aa).

This sequence belongs to the ATPase delta chain family. F-type ATPases have 2 components, F(1) - the catalytic core - and F(0) - the membrane proton channel. F(1) has five subunits: alpha(3), beta(3), gamma(1), delta(1), epsilon(1). F(0) has three main subunits: a(1), b(2) and c(10-14). The alpha and beta chains form an alternating ring which encloses part of the gamma chain. F(1) is attached to F(0) by a central stalk formed by the gamma and epsilon chains, while a peripheral stalk is formed by the delta and b chains.

The protein resides in the cell membrane. Its function is as follows. F(1)F(0) ATP synthase produces ATP from ADP in the presence of a proton or sodium gradient. F-type ATPases consist of two structural domains, F(1) containing the extramembraneous catalytic core and F(0) containing the membrane proton channel, linked together by a central stalk and a peripheral stalk. During catalysis, ATP synthesis in the catalytic domain of F(1) is coupled via a rotary mechanism of the central stalk subunits to proton translocation. Functionally, this protein is part of the stalk that links CF(0) to CF(1). It either transmits conformational changes from CF(0) to CF(1) or is implicated in proton conduction. The protein is ATP synthase subunit delta of Listeria innocua serovar 6a (strain ATCC BAA-680 / CLIP 11262).